The following is a 188-amino-acid chain: ATP synthase subunit delta (188 aa).

This sequence belongs to the ATPase delta chain family. As to quaternary structure, F-type ATPases have 2 components, F(1) - the catalytic core - and F(0) - the membrane proton channel. F(1) has five subunits: alpha(3), beta(3), gamma(1), delta(1), epsilon(1). F(0) has three main subunits: a(1), b(2) and c(10-14). The alpha and beta chains form an alternating ring which encloses part of the gamma chain. F(1) is attached to F(0) by a central stalk formed by the gamma and epsilon chains, while a peripheral stalk is formed by the delta and b chains.

The protein resides in the cell inner membrane. Its function is as follows. F(1)F(0) ATP synthase produces ATP from ADP in the presence of a proton or sodium gradient. F-type ATPases consist of two structural domains, F(1) containing the extramembraneous catalytic core and F(0) containing the membrane proton channel, linked together by a central stalk and a peripheral stalk. During catalysis, ATP synthesis in the catalytic domain of F(1) is coupled via a rotary mechanism of the central stalk subunits to proton translocation. In terms of biological role, this protein is part of the stalk that links CF(0) to CF(1). It either transmits conformational changes from CF(0) to CF(1) or is implicated in proton conduction. This is ATP synthase subunit delta from Rhizobium leguminosarum bv. trifolii (strain WSM2304).